The sequence spans 208 residues: MSRKNSDTKQLEILRYIYDTVENRGFPPTVREICAAVGLSSTSTVHGHLSRLERKGFLIKDATKPRALEITAEGKTELGIKPKEIPVVGVVTAGQPILAVEDISEYFPLPPDLESDAGELFMLKVHGNSMIKAGILNGDNVIVRKQSTANNGEIVVAMTDENEATVKRFFKEDDHYRLQPENDTMAPIILQQVSILGKVVGLYRNNIQ.

The segment at residues valine 30–serine 50 is a DNA-binding region (H-T-H motif). Active-site for autocatalytic cleavage activity residues include serine 129 and lysine 167.

The protein belongs to the peptidase S24 family. Homodimer.

The enzyme catalyses Hydrolysis of Ala-|-Gly bond in repressor LexA.. Functionally, represses a number of genes involved in the response to DNA damage (SOS response), including recA and lexA. In the presence of single-stranded DNA, RecA interacts with LexA causing an autocatalytic cleavage which disrupts the DNA-binding part of LexA, leading to derepression of the SOS regulon and eventually DNA repair. This Lactobacillus acidophilus (strain ATCC 700396 / NCK56 / N2 / NCFM) protein is LexA repressor.